The primary structure comprises 462 residues: Cysteine--tRNA ligase (462 aa).

C27 contributes to the Zn(2+) binding site. The short motif at 29–39 (PTVYNYIHVGN) is the 'HIGH' region element. Zn(2+) is bound by residues C209, H234, and E238. A 'KMSKS' region motif is present at residues 266-270 (KMSKS). Residue K269 participates in ATP binding.

This sequence belongs to the class-I aminoacyl-tRNA synthetase family. Monomer. It depends on Zn(2+) as a cofactor.

It localises to the cytoplasm. The catalysed reaction is tRNA(Cys) + L-cysteine + ATP = L-cysteinyl-tRNA(Cys) + AMP + diphosphate. The sequence is that of Cysteine--tRNA ligase from Finegoldia magna (strain ATCC 29328 / DSM 20472 / WAL 2508) (Peptostreptococcus magnus).